The primary structure comprises 819 residues: Nuclear pore complex protein Nup93 (819 aa).

Threonine 49 is subject to Phosphothreonine. Phosphoserine occurs at positions 52, 66, 72, 75, 80, 430, and 767.

Belongs to the nucleoporin interacting component (NIC) family. Part of the nuclear pore complex (NPC). Component of the p62 complex, a complex composed of NUP62 and NUP54. Forms a complex with NUP35, NUP155, NUP205 and lamin B; the interaction with NUP35 is direct. Does not interact with TPR. Interacts with SMAD4 and IPO7; translocates SMAD4 to the nucleus through the NPC upon BMP7 stimulation resulting in activation of SMAD4 signaling.

It is found in the nucleus membrane. The protein resides in the nucleus. The protein localises to the nuclear pore complex. Its subcellular location is the nucleus envelope. Functionally, plays a role in the nuclear pore complex (NPC) assembly and/or maintenance. May anchor nucleoporins, but not NUP153 and TPR, to the NPC. During renal development, regulates podocyte migration and proliferation through SMAD4 signaling. This is Nuclear pore complex protein Nup93 (Nup93) from Rattus norvegicus (Rat).